The sequence spans 695 residues: tRNA wybutosine-synthesizing protein 4 (695 aa).

S-adenosyl-L-methionine contacts are provided by residues lysine 38, arginine 88, glycine 115, 146–147, 196–197, and glutamate 224; these read DY and DL. Catalysis depends on arginine 88, which acts as the Proton donor; for both methylation and methoxycarbonylation activities. Tyrosine 229 acts as the Proton acceptor; for methoxycarbonylation activity in catalysis.

It belongs to the methyltransferase superfamily. LCMT family.

Its subcellular location is the cytoplasm. The protein localises to the mitochondrion. It carries out the reaction 7-[(3S)-3-amino-3-carboxypropyl]wyosine(37) in tRNA(Phe) + S-adenosyl-L-methionine = 7-[(3S)-(3-amino-3-methoxycarbonyl)propyl]wyosine(37) in tRNA(Phe) + S-adenosyl-L-homocysteine. The catalysed reaction is 7-[(3S)-(3-amino-3-methoxycarbonyl)propyl]wyosine(37) in tRNA(Phe) + S-adenosyl-L-methionine + CO2 = wybutosine(37) in tRNA(Phe) + S-adenosyl-L-homocysteine + 2 H(+). It functions in the pathway tRNA modification; wybutosine-tRNA(Phe) biosynthesis. Its function is as follows. S-adenosyl-L-methionine-dependent methyltransferase that acts as a component of the wybutosine biosynthesis pathway. Wybutosine is a hyper modified guanosine with a tricyclic base found at the 3'-position adjacent to the anticodon of eukaryotic phenylalanine tRNA. Catalyzes the final 2 independent reactions, methylation of the alpha-carboxy group of wybutosine-72 to form wybutosine-58, and methoxycarbonylation of alpha-amino group of wybutosine-58 through the fixation of CO(2) to complete wybutosine. This chain is tRNA wybutosine-synthesizing protein 4 (PPM2), found in Saccharomyces cerevisiae (strain ATCC 204508 / S288c) (Baker's yeast).